A 199-amino-acid polypeptide reads, in one-letter code: Recombination protein RecR (199 aa).

A C4-type zinc finger spans residues C58–C73. One can recognise a Toprim domain in the interval G81–P175.

The protein belongs to the RecR family.

Functionally, may play a role in DNA repair. It seems to be involved in an RecBC-independent recombinational process of DNA repair. It may act with RecF and RecO. The polypeptide is Recombination protein RecR (Synechococcus sp. (strain WH7803)).